A 903-amino-acid chain; its full sequence is Probable leucine--tRNA ligase, mitochondrial (903 aa).

Lys-68 carries the post-translational modification N6-acetyllysine. The short motif at Tyr-92 to Val-102 is the 'HIGH' region element. At Lys-236 the chain carries N6-acetyllysine. A 'KMSKS' region motif is present at residues Lys-639 to Ser-643. Residue Lys-642 coordinates ATP. Ser-711 carries the phosphoserine modification.

Belongs to the class-I aminoacyl-tRNA synthetase family.

The protein resides in the mitochondrion matrix. The enzyme catalyses tRNA(Leu) + L-leucine + ATP = L-leucyl-tRNA(Leu) + AMP + diphosphate. The chain is Probable leucine--tRNA ligase, mitochondrial (LARS2) from Pongo abelii (Sumatran orangutan).